The sequence spans 666 residues: ATP-dependent zinc metalloprotease FtsH (666 aa).

Positions 1 to 23 (MSREVTSGLPQDKPTGSAPPPPP) are disordered. Residues 1-27 (MSREVTSGLPQDKPTGSAPPPPPPWRR) are Cytoplasmic-facing. A helical transmembrane segment spans residues 28-48 (WLLPIGLLVSLVLLFTFPMRP). The Extracellular portion of the chain corresponds to 49–125 (SSGKTLTYSE…RPPGPSLASQ (77 aa)). A helical transmembrane segment spans residues 126–146 (VLAGVLSFLPFLLLLGLFAYS). The Cytoplasmic segment spans residues 147 to 666 (GRRAGAGFLA…RTAASSDDLL (520 aa)). 219–226 (GPPGTGKT) contributes to the ATP binding site. Residue H442 coordinates Zn(2+). The active site involves E443. 2 residues coordinate Zn(2+): H446 and D518. Positions 626–666 (PEEHREAAARHVRRPGIAAATGASMAGGSEPRTAASSDDLL) are disordered. Residues 641–653 (GIAAATGASMAGG) are compositionally biased toward low complexity.

In the central section; belongs to the AAA ATPase family. The protein in the C-terminal section; belongs to the peptidase M41 family. In terms of assembly, homohexamer. Zn(2+) serves as cofactor.

Its subcellular location is the cell membrane. Acts as a processive, ATP-dependent zinc metallopeptidase for both cytoplasmic and membrane proteins. Plays a role in the quality control of integral membrane proteins. The polypeptide is ATP-dependent zinc metalloprotease FtsH (Acidothermus cellulolyticus (strain ATCC 43068 / DSM 8971 / 11B)).